The chain runs to 396 residues: 1-deoxy-D-xylulose 5-phosphate reductoisomerase (396 aa).

5 residues coordinate NADPH: threonine 13, glycine 14, serine 15, isoleucine 16, and asparagine 127. Lysine 128 is a binding site for 1-deoxy-D-xylulose 5-phosphate. Glutamate 129 provides a ligand contact to NADPH. Aspartate 153 provides a ligand contact to Mn(2+). 1-deoxy-D-xylulose 5-phosphate-binding residues include serine 154, glutamate 155, serine 184, and histidine 207. A Mn(2+)-binding site is contributed by glutamate 155. Glycine 213 lines the NADPH pocket. Positions 220, 225, 226, and 229 each coordinate 1-deoxy-D-xylulose 5-phosphate. Position 229 (glutamate 229) interacts with Mn(2+).

The protein belongs to the DXR family. Mg(2+) is required as a cofactor. It depends on Mn(2+) as a cofactor.

The catalysed reaction is 2-C-methyl-D-erythritol 4-phosphate + NADP(+) = 1-deoxy-D-xylulose 5-phosphate + NADPH + H(+). Its pathway is isoprenoid biosynthesis; isopentenyl diphosphate biosynthesis via DXP pathway; isopentenyl diphosphate from 1-deoxy-D-xylulose 5-phosphate: step 1/6. In terms of biological role, catalyzes the NADPH-dependent rearrangement and reduction of 1-deoxy-D-xylulose-5-phosphate (DXP) to 2-C-methyl-D-erythritol 4-phosphate (MEP). In Pseudomonas syringae pv. tomato (strain ATCC BAA-871 / DC3000), this protein is 1-deoxy-D-xylulose 5-phosphate reductoisomerase.